A 247-amino-acid polypeptide reads, in one-letter code: Carboxy-S-adenosyl-L-methionine synthase (247 aa).

Residues Y39, 64-66 (GCS), 117-118 (DI), N132, and R199 contribute to the S-adenosyl-L-methionine site.

This sequence belongs to the class I-like SAM-binding methyltransferase superfamily. Cx-SAM synthase family. Homodimer.

It carries out the reaction prephenate + S-adenosyl-L-methionine = carboxy-S-adenosyl-L-methionine + 3-phenylpyruvate + H2O. Functionally, catalyzes the conversion of S-adenosyl-L-methionine (SAM) to carboxy-S-adenosyl-L-methionine (Cx-SAM). This Aeromonas salmonicida (strain A449) protein is Carboxy-S-adenosyl-L-methionine synthase.